Consider the following 230-residue polypeptide: Transmembrane protein 221 (230 aa).

The next 4 helical transmembrane spans lie at 12 to 32, 73 to 93, 125 to 145, and 147 to 167; these read AMTLLGIPAAVLVALAAQLLF, ALAALAQVLGLSCLLLAALCG, LFCCGVSVYLAALAIYALLLF, and IEAGAAAASILGSGALILVAI. Positions 184–230 are disordered; the sequence is RELSPPSFEDEPARPSEDSKSGCRAQPPQDEETETPIGAVTHQGSHF. The span at 194 to 204 shows a compositional bias: basic and acidic residues; that stretch reads EPARPSEDSKS.

Its subcellular location is the membrane. The chain is Transmembrane protein 221 (Tmem221) from Mus musculus (Mouse).